The sequence spans 156 residues: Ribosomal RNA large subunit methyltransferase H (156 aa).

Residues Leu73, Gly104, and 123 to 128 (ISSMTL) each bind S-adenosyl-L-methionine.

This sequence belongs to the RNA methyltransferase RlmH family. In terms of assembly, homodimer.

It is found in the cytoplasm. It carries out the reaction pseudouridine(1915) in 23S rRNA + S-adenosyl-L-methionine = N(3)-methylpseudouridine(1915) in 23S rRNA + S-adenosyl-L-homocysteine + H(+). Specifically methylates the pseudouridine at position 1915 (m3Psi1915) in 23S rRNA. The polypeptide is Ribosomal RNA large subunit methyltransferase H (Janthinobacterium sp. (strain Marseille) (Minibacterium massiliensis)).